The following is a 30-amino-acid chain: Putative alpha-amylase inhibitor (30 aa).

The protein belongs to the leguminous lectin family.

Functionally, lectin and alpha-amylase inhibitor. Acts as a defensive protein against insects. The sequence is that of Putative alpha-amylase inhibitor from Phaseolus vulgaris (Kidney bean).